Consider the following 608-residue polypeptide: Nuclear receptor subfamily 2 group C member 1 (608 aa).

Positions Met-1–Met-179 are required for interaction with KAT2B. The nuclear receptor DNA-binding region spans Phe-111–Cys-186. 2 consecutive NR C4-type zinc fingers follow at residues Cys-114–Cys-134 and Cys-150–Cys-169. 2 positions are modified to phosphoserine: Ser-198 and Ser-216. Thr-221 bears the Phosphothreonine mark. Position 223 is a phosphothreonine; by MAPK1 (Thr-223). Residue Lys-251 forms a Glycyl lysine isopeptide (Lys-Gly) (interchain with G-Cter in SUMO); alternate linkage. Residue Lys-251 forms a Glycyl lysine isopeptide (Lys-Gly) (interchain with G-Cter in SUMO2); alternate linkage. An NR LBD domain is found at Gly-353–Glu-595. At Ser-586 the chain carries Phosphoserine; by PKC. Residues Pro-589–Ile-608 form a required for interaction with NRIP1 region. Lys-593 is covalently cross-linked (Glycyl lysine isopeptide (Lys-Gly) (interchain with G-Cter in SUMO2)).

The protein belongs to the nuclear hormone receptor family. NR2 subfamily. Homodimer. Heterodimer; with NR2C2 which is required for chromatin remodeling and for binding to promoter regions such as globin DR1 repeats. Interacts with ESR1; the interaction prevents homodimerization of ESR1 and suppresses its transcriptional activity and cell growth. Interacts with NRIP1 (via its LXXLL motifs); the interaction provides corepressor activity. Interacts with HDAC3 (via the DNA-binding domain); the interaction recruits phosphorylated NR2C1 to PML bodies for sumoylation. Interacts with HDAC4 (via the DNA-binding domain). Interacts with PIAS1; the interaction is required for sumoylation of NR2C1. Interacts with UBE2I; the interaction is required for sumoylation of NR2C1. Interacts with KAT2B; the interaction acts as a corepressor of gene expression. In terms of processing, sumoylation requires both PIAS1 and UBE2I. Sumoylation appears to dissociate NR2C1 from the PML nuclear bodies. Enhances the interaction with NRIP1 but inhibits interaction with KAT2B. In proliferating cells, stimulation by all-trans retinoic acid, activation of MAPK1-mediated phosphorylation and recruitment to PML bodies with subsequent sumoylation, suppresses OCT4 expression. Post-translationally, phosphorylated on several serine and threonine residues. Phosphorylation on Thr-223, stimulated by all-trans retinoic acid (atRA) mediates PML location and sumoylation in proliferating cells which then modulates its association with effector molecules, KAT2B and NRIP1. Phosphorylation on Ser-586 by PKC is important for protein stability and function as activator of RARB.

It localises to the nucleus. The protein localises to the PML body. Orphan nuclear receptor. Binds the IR7 element in the promoter of its own gene in an autoregulatory negative feedback mechanism. Primarily repressor of a broad range of genes including ESR1 and RARB. Together with NR2C2, forms the core of the DRED (direct repeat erythroid-definitive) complex that represses embryonic and fetal globin transcription. Binds to hormone response elements (HREs) consisting of two 5'-AGGTCA-3' half site direct repeat consensus sequences. Also activator of OCT4 gene expression. Plays a fundamental role in early embryogenesis and regulates embryonic stem cell proliferation and differentiation. Mediator of retinoic acid-regulated preadipocyte proliferation. This Bos taurus (Bovine) protein is Nuclear receptor subfamily 2 group C member 1 (NR2C1).